We begin with the raw amino-acid sequence, 299 residues long: Apolipoprotein E (299 aa).

The signal sequence occupies residues Met1–Ala18. The interval Val74 to Glu245 is 8 X 22 AA approximate tandem repeats. 8 tandem repeats follow at residues Leu75–Val95, Pro96–Gly117, Ala118–Gly139, Gln140–Leu161, Arg162–Glu183, Arg184–Leu206, Thr207–Arg225, and Gly224–Glu242. Met137 bears the Methionine sulfoxide mark. The residue at position 141 (Ser141) is a Phosphoserine. Residues His152–Arg162 are LDL and other lipoprotein receptors binding. Leu156 to Arg159 lines the heparin pocket. The lipid-binding and lipoprotein association stretch occupies residues Ala205–Met273. Gly219–Leu226 lines the heparin pocket. The specificity for association with VLDL stretch occupies residues Arg261 to Met273.

Belongs to the apolipoprotein A1/A4/E family. As to quaternary structure, homotetramer. May interact with ABCA1; functionally associated with ABCA1 in the biogenesis of HDLs. May interact with APP/A4 amyloid-beta peptide; the interaction is extremely stable in vitro but its physiological significance is unclear. May interact with MAPT. May interact with MAP2. In the cerebrospinal fluid, interacts with secreted SORL1. Interacts with PMEL; this allows the loading of PMEL luminal fragment on ILVs to induce fibril nucleation. APOE exists as multiple glycosylated and sialylated glycoforms within cells and in plasma. The extent of glycosylation and sialylation are tissue and context specific. In terms of processing, glycated in plasma VLDL. Post-translationally, phosphorylated by FAM20C in the extracellular medium.

It is found in the secreted. The protein localises to the extracellular space. Its subcellular location is the extracellular matrix. It localises to the extracellular vesicle. The protein resides in the endosome. It is found in the multivesicular body. Functionally, APOE is an apolipoprotein, a protein associating with lipid particles, that mainly functions in lipoprotein-mediated lipid transport between organs via the plasma and interstitial fluids. APOE is a core component of plasma lipoproteins and is involved in their production, conversion and clearance. Apolipoproteins are amphipathic molecules that interact both with lipids of the lipoprotein particle core and the aqueous environment of the plasma. As such, APOE associates with chylomicrons, chylomicron remnants, very low density lipoproteins (VLDL) and intermediate density lipoproteins (IDL) but shows a preferential binding to high-density lipoproteins (HDL). It also binds a wide range of cellular receptors including the LDL receptor/LDLR, the LDL receptor-related proteins LRP1, LRP2 and LRP8 and the very low-density lipoprotein receptor/VLDLR that mediate the cellular uptake of the APOE-containing lipoprotein particles. Finally, APOE also has a heparin-binding activity and binds heparan-sulfate proteoglycans on the surface of cells, a property that supports the capture and the receptor-mediated uptake of APOE-containing lipoproteins by cells. A main function of APOE is to mediate lipoprotein clearance through the uptake of chylomicrons, VLDLs, and HDLs by hepatocytes. APOE is also involved in the biosynthesis by the liver of VLDLs as well as their uptake by peripheral tissues ensuring the delivery of triglycerides and energy storage in muscle, heart and adipose tissues. By participating in the lipoprotein-mediated distribution of lipids among tissues, APOE plays a critical role in plasma and tissues lipid homeostasis. APOE is also involved in two steps of reverse cholesterol transport, the HDLs-mediated transport of cholesterol from peripheral tissues to the liver, and thereby plays an important role in cholesterol homeostasis. First, it is functionally associated with ABCA1 in the biogenesis of HDLs in tissues. Second, it is enriched in circulating HDLs and mediates their uptake by hepatocytes. APOE also plays an important role in lipid transport in the central nervous system, regulating neuron survival and sprouting. The sequence is that of Apolipoprotein E (Apoe) from Tympanoctomys barrerae (Plains viscacha rat).